A 455-amino-acid polypeptide reads, in one-letter code: Ribulose bisphosphate carboxylase large chain (455 aa).

N6,N6,N6-trimethyllysine is present on Lys-5. Asn-114 and Thr-164 together coordinate substrate. Lys-166 serves as the catalytic Proton acceptor. Lys-168 serves as a coordination point for substrate. Residues Lys-192, Asp-194, and Glu-195 each contribute to the Mg(2+) site. Lys-192 carries the N6-carboxylysine modification. The Proton acceptor role is filled by His-285. Positions 286, 318, and 370 each coordinate substrate.

Belongs to the RuBisCO large chain family. Type I subfamily. Heterohexadecamer of 8 large chains and 8 small chains; disulfide-linked. The disulfide link is formed within the large subunit homodimers. Mg(2+) serves as cofactor. Post-translationally, the disulfide bond which can form in the large chain dimeric partners within the hexadecamer appears to be associated with oxidative stress and protein turnover.

The protein resides in the plastid. It is found in the chloroplast. It carries out the reaction 2 (2R)-3-phosphoglycerate + 2 H(+) = D-ribulose 1,5-bisphosphate + CO2 + H2O. The enzyme catalyses D-ribulose 1,5-bisphosphate + O2 = 2-phosphoglycolate + (2R)-3-phosphoglycerate + 2 H(+). In terms of biological role, ruBisCO catalyzes two reactions: the carboxylation of D-ribulose 1,5-bisphosphate, the primary event in carbon dioxide fixation, as well as the oxidative fragmentation of the pentose substrate in the photorespiration process. Both reactions occur simultaneously and in competition at the same active site. The protein is Ribulose bisphosphate carboxylase large chain of Lupinus digitatus (Lupine).